Reading from the N-terminus, the 427-residue chain is UDP-N-acetyl-D-mannosamine dehydrogenase (427 aa).

Residues Tyr-19, Ile-20, Asp-39, Arg-44, Thr-91, and Thr-130 each coordinate NAD(+). Residues Arg-155, Val-156, Lys-207, Asn-211, Arg-214, His-245, Arg-247, and Gly-258 each coordinate UDP-N-acetyl-alpha-D-mannosaminouronate. The active-site Proton donor/acceptor is Lys-207. Cys-261 (nucleophile) is an active-site residue. 2 residues coordinate UDP-N-acetyl-alpha-D-mannosaminouronate: Tyr-318 and Lys-319. Arg-326 contacts NAD(+). Lys-404 serves as a coordination point for UDP-N-acetyl-alpha-D-mannosaminouronate.

Belongs to the UDP-glucose/GDP-mannose dehydrogenase family. Homotetramer; probably dimer of dimers.

It carries out the reaction UDP-N-acetyl-alpha-D-mannosamine + 2 NAD(+) + H2O = UDP-N-acetyl-alpha-D-mannosaminouronate + 2 NADH + 3 H(+). Functionally, catalyzes the four-electron oxidation of UDP-N-acetyl-D-mannosamine (UDP-ManNAc), reducing NAD(+) and releasing UDP-N-acetylmannosaminuronic acid (UDP-ManNAcA). Cannot use NADP instead of NAD. This Methanococcus maripaludis (strain DSM 14266 / JCM 13030 / NBRC 101832 / S2 / LL) protein is UDP-N-acetyl-D-mannosamine dehydrogenase (wecC).